We begin with the raw amino-acid sequence, 619 residues long: Translation initiation factor eIF2B subunit delta (619 aa).

Positions 21 to 32 are enriched in basic and acidic residues; the sequence is GDYLDSKQEGKP. The interval 21 to 251 is disordered; sequence GDYLDSKQEG…PKQRGKITKK (231 aa). Low complexity predominate over residues 42–56; the sequence is TNTSPVSIPTIISPP. Residues 57 to 84 show a composition bias toward polar residues; that stretch reads LGSNNSNYGKSPKSSYDNKQTSPLLSAS. The segment covering 85-98 has biased composition (low complexity); the sequence is NNRKNNNNNNNNNN. Residues 99–125 are compositionally biased toward polar residues; the sequence is ATSPKDSSIIGKNNVNSDLSKVSSSLN. Over residues 136-199 the composition is skewed to low complexity; the sequence is STSSTPTSTP…KQQSKQQATQ (64 aa). Over residues 200–244 the composition is skewed to basic and acidic residues; sequence QDKKDKEQQQQQQDKQDKESNEIKGSKEVAKDGQHGVKQFDDPKQ.

This sequence belongs to the eIF-2B alpha/beta/delta subunits family. In terms of assembly, component of the translation initiation factor 2B (eIF2B) complex which is a heterodecamer of two sets of five different subunits: alpha, beta, gamma, delta and epsilon. Subunits alpha, beta and delta comprise a regulatory subcomplex and subunits epsilon and gamma comprise a catalytic subcomplex. Within the complex, the hexameric regulatory complex resides at the center, with the two heterodimeric catalytic subcomplexes bound on opposite sides.

The protein localises to the cytoplasm. The protein resides in the cytosol. In terms of biological role, acts as a component of the translation initiation factor 2B (eIF2B) complex, which catalyzes the exchange of GDP for GTP on eukaryotic initiation factor 2 (eIF2) gamma subunit. Its guanine nucleotide exchange factor activity is repressed when bound to eIF2 complex phosphorylated on the alpha subunit, thereby limiting the amount of methionyl-initiator methionine tRNA available to the ribosome and consequently global translation is repressed. The protein is Translation initiation factor eIF2B subunit delta (eif2b4) of Dictyostelium discoideum (Social amoeba).